The following is an 89-amino-acid chain: Small ribosomal subunit protein uS15 (89 aa).

The protein belongs to the universal ribosomal protein uS15 family. As to quaternary structure, part of the 30S ribosomal subunit. Forms a bridge to the 50S subunit in the 70S ribosome, contacting the 23S rRNA.

Its function is as follows. One of the primary rRNA binding proteins, it binds directly to 16S rRNA where it helps nucleate assembly of the platform of the 30S subunit by binding and bridging several RNA helices of the 16S rRNA. Functionally, forms an intersubunit bridge (bridge B4) with the 23S rRNA of the 50S subunit in the ribosome. The chain is Small ribosomal subunit protein uS15 from Psychromonas ingrahamii (strain DSM 17664 / CCUG 51855 / 37).